Reading from the N-terminus, the 361-residue chain is Phospho-N-acetylmuramoyl-pentapeptide-transferase (361 aa).

Helical transmembrane passes span 17 to 37 (SIYL…LFAG), 66 to 86 (GTPT…SIFI), 90 to 110 (TNSL…IGFI), 129 to 149 (LLFQ…IGLT), 162 to 182 (ISAY…QIVL), 197 to 217 (GLAI…AYFT), 232 to 252 (VGSG…LGFL), 261 to 281 (IFMG…IAII), 286 to 306 (LMLP…ILQV), and 340 to 360 (FWIG…MRGI).

This sequence belongs to the glycosyltransferase 4 family. MraY subfamily. Mg(2+) is required as a cofactor.

Its subcellular location is the cell inner membrane. The catalysed reaction is UDP-N-acetyl-alpha-D-muramoyl-L-alanyl-gamma-D-glutamyl-meso-2,6-diaminopimeloyl-D-alanyl-D-alanine + di-trans,octa-cis-undecaprenyl phosphate = di-trans,octa-cis-undecaprenyl diphospho-N-acetyl-alpha-D-muramoyl-L-alanyl-D-glutamyl-meso-2,6-diaminopimeloyl-D-alanyl-D-alanine + UMP. Its pathway is cell wall biogenesis; peptidoglycan biosynthesis. Functionally, catalyzes the initial step of the lipid cycle reactions in the biosynthesis of the cell wall peptidoglycan: transfers peptidoglycan precursor phospho-MurNAc-pentapeptide from UDP-MurNAc-pentapeptide onto the lipid carrier undecaprenyl phosphate, yielding undecaprenyl-pyrophosphoryl-MurNAc-pentapeptide, known as lipid I. The polypeptide is Phospho-N-acetylmuramoyl-pentapeptide-transferase (Fusobacterium nucleatum subsp. nucleatum (strain ATCC 25586 / DSM 15643 / BCRC 10681 / CIP 101130 / JCM 8532 / KCTC 2640 / LMG 13131 / VPI 4355)).